Consider the following 323-residue polypeptide: Biotin synthase (323 aa).

The region spanning 46–264 (TEIQLSSLLS…IAVARITMPR (219 aa)) is the Radical SAM core domain. Residues cysteine 61, cysteine 65, and cysteine 68 each coordinate [4Fe-4S] cluster. Residues cysteine 105, cysteine 136, cysteine 196, and arginine 268 each contribute to the [2Fe-2S] cluster site.

Belongs to the radical SAM superfamily. Biotin synthase family. As to quaternary structure, homodimer. [4Fe-4S] cluster is required as a cofactor. [2Fe-2S] cluster serves as cofactor.

The catalysed reaction is (4R,5S)-dethiobiotin + (sulfur carrier)-SH + 2 reduced [2Fe-2S]-[ferredoxin] + 2 S-adenosyl-L-methionine = (sulfur carrier)-H + biotin + 2 5'-deoxyadenosine + 2 L-methionine + 2 oxidized [2Fe-2S]-[ferredoxin]. Its pathway is cofactor biosynthesis; biotin biosynthesis; biotin from 7,8-diaminononanoate: step 2/2. Catalyzes the conversion of dethiobiotin (DTB) to biotin by the insertion of a sulfur atom into dethiobiotin via a radical-based mechanism. This Bordetella avium (strain 197N) protein is Biotin synthase.